The primary structure comprises 593 residues: Isocitrate dehydrogenase kinase/phosphatase (593 aa).

ATP is bound by residues 324-330 and lysine 345; that span reads APGIRGL. Residue aspartate 380 is part of the active site.

Belongs to the AceK family.

Its subcellular location is the cytoplasm. It carries out the reaction L-seryl-[isocitrate dehydrogenase] + ATP = O-phospho-L-seryl-[isocitrate dehydrogenase] + ADP + H(+). In terms of biological role, bifunctional enzyme which can phosphorylate or dephosphorylate isocitrate dehydrogenase (IDH) on a specific serine residue. This is a regulatory mechanism which enables bacteria to bypass the Krebs cycle via the glyoxylate shunt in response to the source of carbon. When bacteria are grown on glucose, IDH is fully active and unphosphorylated, but when grown on acetate or ethanol, the activity of IDH declines drastically concomitant with its phosphorylation. The polypeptide is Isocitrate dehydrogenase kinase/phosphatase (Dechloromonas aromatica (strain RCB)).